Reading from the N-terminus, the 322-residue chain is tRNA pseudouridine synthase B (322 aa).

Residues 1–11 show a composition bias toward basic and acidic residues; that stretch reads MRPPRTTELDR. The segment at 1–22 is disordered; it reads MRPPRTTELDRPMTTAASQRPR. D65 acts as the Nucleophile in catalysis.

This sequence belongs to the pseudouridine synthase TruB family. Type 1 subfamily.

The catalysed reaction is uridine(55) in tRNA = pseudouridine(55) in tRNA. In terms of biological role, responsible for synthesis of pseudouridine from uracil-55 in the psi GC loop of transfer RNAs. The protein is tRNA pseudouridine synthase B of Burkholderia lata (strain ATCC 17760 / DSM 23089 / LMG 22485 / NCIMB 9086 / R18194 / 383).